Here is a 900-residue protein sequence, read N- to C-terminus: DNA mismatch repair protein MutS (900 aa).

637–644 lines the ATP pocket; that stretch reads GPNMAGKS.

This sequence belongs to the DNA mismatch repair MutS family.

Its function is as follows. This protein is involved in the repair of mismatches in DNA. It is possible that it carries out the mismatch recognition step. This protein has a weak ATPase activity. This is DNA mismatch repair protein MutS from Methanosarcina acetivorans (strain ATCC 35395 / DSM 2834 / JCM 12185 / C2A).